The following is a 399-amino-acid chain: Formate-dependent phosphoribosylglycinamide formyltransferase (399 aa).

N(1)-(5-phospho-beta-D-ribosyl)glycinamide contacts are provided by residues Glu8–Leu9 and Glu68. Residues Arg100, Lys141, Ser146–Gln151, Glu185–Ala188, and Glu193 each bind ATP. Residues Val105–Leu308 form the ATP-grasp domain. Residues Glu266 and Glu279 each contribute to the Mg(2+) site. Residues Asp286, Lys361, and Arg368–Arg369 each bind N(1)-(5-phospho-beta-D-ribosyl)glycinamide.

This sequence belongs to the PurK/PurT family. In terms of assembly, homodimer.

The enzyme catalyses N(1)-(5-phospho-beta-D-ribosyl)glycinamide + formate + ATP = N(2)-formyl-N(1)-(5-phospho-beta-D-ribosyl)glycinamide + ADP + phosphate + H(+). The protein operates within purine metabolism; IMP biosynthesis via de novo pathway; N(2)-formyl-N(1)-(5-phospho-D-ribosyl)glycinamide from N(1)-(5-phospho-D-ribosyl)glycinamide (formate route): step 1/1. Functionally, involved in the de novo purine biosynthesis. Catalyzes the transfer of formate to 5-phospho-ribosyl-glycinamide (GAR), producing 5-phospho-ribosyl-N-formylglycinamide (FGAR). Formate is provided by PurU via hydrolysis of 10-formyl-tetrahydrofolate. This Bifidobacterium adolescentis (strain ATCC 15703 / DSM 20083 / NCTC 11814 / E194a) protein is Formate-dependent phosphoribosylglycinamide formyltransferase.